The primary structure comprises 281 residues: Transmembrane protein 163 (281 aa).

Residues 1-80 (MEPLDTELCY…HEAQNYRKKA (80 aa)) are Cytoplasmic-facing. The tract at residues 16-44 (IVQPSCNGQTPPGHRTLSPTQQMDHEQQM) is disordered. The helical transmembrane segment at 81 to 101 (LWVSWLSIAITLILAIAAFTV) threads the bilayer. Residues 102–108 (SVMRYSA) are Extracellular-facing. Residues 109–129 (SSFGFALDAVLDVLSSAIVLW) traverse the membrane as a helical segment. The Cytoplasmic segment spans residues 130–145 (RYSNAAAVHSAHREYM). Residues 146-166 (ACCILGVIFLLSSICIVSKAI) form a helical membrane-spanning segment. Over 167–179 (HDLSIRVMPEVDG) the chain is Extracellular. A helical membrane pass occupies residues 180 to 200 (FLFSVSILSGILCSLLAAIKF). Topologically, residues 201 to 209 (MLGKVLTSR) are cytoplasmic. The chain crosses the membrane as a helical span at residues 210–230 (ALITDGFNSLVGGIMGFSILL). Topologically, residues 231–240 (SAEVYKHNSK) are extracellular. A helical transmembrane segment spans residues 241-261 (VWYLDGSVGILIGLIIMSYGI). Topologically, residues 262–281 (KLLMDMVPRVRQTRHYEMFE) are cytoplasmic.

Belongs to the TMEM163 family.

It is found in the cytoplasmic vesicle. The protein resides in the secretory vesicle. It localises to the synaptic vesicle membrane. Its subcellular location is the early endosome membrane. In terms of biological role, may bind zinc and other divalent cations and recruit them to vesicular organelles. The chain is Transmembrane protein 163 (tmem163) from Xenopus laevis (African clawed frog).